A 289-amino-acid chain; its full sequence is ATP synthase gamma chain (289 aa).

This sequence belongs to the ATPase gamma chain family. F-type ATPases have 2 components, CF(1) - the catalytic core - and CF(0) - the membrane proton channel. CF(1) has five subunits: alpha(3), beta(3), gamma(1), delta(1), epsilon(1). CF(0) has three main subunits: a, b and c.

The protein localises to the cell inner membrane. Produces ATP from ADP in the presence of a proton gradient across the membrane. The gamma chain is believed to be important in regulating ATPase activity and the flow of protons through the CF(0) complex. The polypeptide is ATP synthase gamma chain (Polynucleobacter asymbioticus (strain DSM 18221 / CIP 109841 / QLW-P1DMWA-1) (Polynucleobacter necessarius subsp. asymbioticus)).